Consider the following 494-residue polypeptide: NADH-quinone oxidoreductase subunit N (494 aa).

Helical transmembrane passes span 9 to 29, 36 to 56, 73 to 93, 107 to 127, 131 to 151, 166 to 186, 209 to 229, 241 to 261, 278 to 298, 304 to 324, 339 to 359, 382 to 402, 416 to 436, and 469 to 489; these read VIPEIFLAAATCAILLIDLFL, LTYVLSLATLVVCAVLSLSDF, PMSNLLKFCTYIAVGLTLVYS, LGGEFYILSLFTVLGQMVMMS, FLIIYLGLEIMSLSLYALVAF, FVLGALASGFLLYGISMLYGA, LIFGLVFVVAGLAFKLGAVPF, PTAVTLMLGGAPKLAAFAITI, MLTILSVLSMAIGNITAIMQT, LAYSTISQVGFILLGLLSGVV, MFYVITYVLTTLGMFGVIMLL, FAFVTLLLMFSLAGVPPVVGF, GQIWLAVVAVLFSLIGAFYYL, and ALLALGLVPGPLMTACAAAII.

It belongs to the complex I subunit 2 family. NDH-1 is composed of 14 different subunits. Subunits NuoA, H, J, K, L, M, N constitute the membrane sector of the complex.

It is found in the cell inner membrane. The catalysed reaction is a quinone + NADH + 5 H(+)(in) = a quinol + NAD(+) + 4 H(+)(out). Functionally, NDH-1 shuttles electrons from NADH, via FMN and iron-sulfur (Fe-S) centers, to quinones in the respiratory chain. The immediate electron acceptor for the enzyme in this species is believed to be ubiquinone. Couples the redox reaction to proton translocation (for every two electrons transferred, four hydrogen ions are translocated across the cytoplasmic membrane), and thus conserves the redox energy in a proton gradient. This chain is NADH-quinone oxidoreductase subunit N, found in Herminiimonas arsenicoxydans.